The chain runs to 245 residues: Orotidine 5'-phosphate decarboxylase (245 aa).

Substrate contacts are provided by residues aspartate 22, lysine 44, 71–80, threonine 131, arginine 192, glutamine 201, glycine 221, and arginine 222; that span reads DLKFHDIPNT. Lysine 73 acts as the Proton donor in catalysis.

Belongs to the OMP decarboxylase family. Type 1 subfamily. In terms of assembly, homodimer.

It catalyses the reaction orotidine 5'-phosphate + H(+) = UMP + CO2. It functions in the pathway pyrimidine metabolism; UMP biosynthesis via de novo pathway; UMP from orotate: step 2/2. Catalyzes the decarboxylation of orotidine 5'-monophosphate (OMP) to uridine 5'-monophosphate (UMP). This is Orotidine 5'-phosphate decarboxylase from Escherichia coli O6:K15:H31 (strain 536 / UPEC).